We begin with the raw amino-acid sequence, 131 residues long: Actin-associated protein FAM107A (131 aa).

Positions 57–77 (VLEHRRRNQLIKKKEEELEAK) form a coiled coil. Residues 61 to 71 (RRRNQLIKKKE) carry the Nuclear localization signal motif.

As to quaternary structure, interacts with ACTB. Interacts with COMMD1; this interaction stabilizes COMMD1 in the nucleus. Interacts with MAP1A. Interacts with PRDX1. Interacts with F-actin.

The protein localises to the nucleus. It is found in the cytoplasm. It localises to the cytoskeleton. The protein resides in the stress fiber. Its subcellular location is the cell junction. The protein localises to the focal adhesion. It is found in the cell projection. It localises to the ruffle membrane. The protein resides in the synapse. Functionally, stress-inducible actin-binding protein that plays a role in synaptic and cognitive functions by modulating actin filamentous (F-actin) dynamics. Mediates polymerization of globular actin to F-actin. Also binds to, stabilizes and bundles F-actin. Involved in synaptic function by regulating neurite outgrowth in an actin-dependent manner and for the acquisition of hippocampus-dependent cognitive function, such as learning and long-term memory. Plays a role in the actin and microtubule cytoskeleton organization; negatively regulates focal adhesion (FA) assembly promoting malignant glial cell migration in an actin-, microtubule- and MAP1A-dependent manner. Also involved in neuroblastoma G1/S phase cell cycle progression and cell proliferation inhibition by stimulating ubiquitination of NF-kappa-B subunit RELA and NF-kappa-B degradation in a COMMD1- and actin-dependent manner. May play a role in tumor development. In Rattus norvegicus (Rat), this protein is Actin-associated protein FAM107A.